A 336-amino-acid chain; its full sequence is Glucan endo-1,3-beta-glucosidase A (336 aa).

Residues 1–23 (MAFLSSLLASLLLVGLLIQITGA) form the signal peptide. Glutamine 24 is modified (pyrrolidone carboxylic acid). Glutamate 118 functions as the Proton donor in the catalytic mechanism. Glutamate 257 serves as the catalytic Nucleophile.

It belongs to the glycosyl hydrolase 17 family.

It localises to the secreted. The protein localises to the extracellular space. The catalysed reaction is Hydrolysis of (1-&gt;3)-beta-D-glucosidic linkages in (1-&gt;3)-beta-D-glucans.. Implicated in the defense of plants against pathogens. The protein is Glucan endo-1,3-beta-glucosidase A of Solanum lycopersicum (Tomato).